The primary structure comprises 422 residues: 5'-deoxyadenosine deaminase (422 aa).

Positions 57 and 59 each coordinate Zn(2+). Residues E86 and H178 each contribute to the substrate site. Position 205 (H205) interacts with Zn(2+). Positions 208 and 294 each coordinate substrate. D294 serves as a coordination point for Zn(2+).

Belongs to the metallo-dependent hydrolases superfamily. MTA/SAH deaminase family. Homotetramer. It depends on Zn(2+) as a cofactor.

The enzyme catalyses 5'-deoxyadenosine + H2O + H(+) = 5'-deoxyinosine + NH4(+). It catalyses the reaction S-adenosyl-L-homocysteine + H2O + H(+) = S-inosyl-L-homocysteine + NH4(+). The catalysed reaction is S-methyl-5'-thioadenosine + H2O + H(+) = S-methyl-5'-thioinosine + NH4(+). It carries out the reaction adenosine + H2O + H(+) = inosine + NH4(+). Its pathway is amino-acid biosynthesis; S-adenosyl-L-methionine biosynthesis. Catalyzes the deamination of three SAM-derived enzymatic products, namely 5'-deoxyadenosine, S-adenosyl-L-homocysteine, and 5'-methylthioadenosine, to produce the inosine analogs. Can also deaminate adenosine. The preferred substrate for this enzyme is 5'-deoxyadenosine, but all these substrates are efficiently deaminated. Likely functions in a S-adenosyl-L-methionine (SAM) recycling pathway from S-adenosyl-L-homocysteine (SAH) produced from SAM-dependent methylation reactions. May also be involved in the recycling of 5'-deoxyadenosine, whereupon the 5'-deoxyribose moiety of 5'-deoxyinosine is further metabolized to deoxyhexoses used for the biosynthesis of aromatic amino acids in methanogens. In Methanococcus maripaludis (strain C5 / ATCC BAA-1333), this protein is 5'-deoxyadenosine deaminase.